Consider the following 651-residue polypeptide: Polyadenylate-binding protein 1 (651 aa).

The segment covering 1-27 (MSSTESPVPAAAAPAEAVPASTPAPAA) has biased composition (low complexity). The tract at residues 1-42 (MSSTESPVPAAAAPAEAVPASTPAPAAEQPAVGNGEQRNNAD) is disordered. 4 consecutive RRM domains span residues 47–125 (TSLY…WSQR), 135–211 (GNIF…HHIP), 227–304 (TNVY…RAQK), and 330–407 (VNLY…LAQR). Disordered regions lie at residues 481–554 (QPGQ…EADQ) and 632–651 (QNDS…KTEA). The segment covering 529-540 (AGQPVPGQPMPR) has biased composition (pro residues). Positions 555 to 632 (PGALTAAALA…ALEVLKEYQQ (78 aa)) constitute a PABC domain. The span at 636–651 (AGAEAEANAEAPKTEA) shows a compositional bias: low complexity.

It belongs to the polyadenylate-binding protein type-1 family. As to quaternary structure, part of large ribonucleoprotein complexes (mRNPs) containing RNA-binding proteins RRM4 and PAB1, endosome-binding protein UPA1, core scaffold protein UPA2 and associated factor GRP1. Interacts (via PABC domain) with UPA1 (via PAM2 domain). Interacts (via PABC domain) with UPA2 (via PAM2 domains).

Its subcellular location is the cytoplasm. It is found in the cytoskeleton. The protein localises to the endosome. Functionally, RNA-binding protein involved in the formation of polar-growing hyphae which is essential for infection by the plant pathogen. Component of endosomal mRNA transport that regulates polarity of the infectious hyphae by transporting a broad spectrum of cargo mRNAs from the nucleus to cell poles. The chain is Polyadenylate-binding protein 1 from Mycosarcoma maydis (Corn smut fungus).